The chain runs to 351 residues: Protein pelota homolog (351 aa).

This sequence belongs to the eukaryotic release factor 1 family. Pelota subfamily. In terms of assembly, monomer. Requires a divalent metal cation as cofactor.

Its subcellular location is the cytoplasm. Functionally, may function in recognizing stalled ribosomes, interact with stem-loop structures in stalled mRNA molecules, and effect endonucleolytic cleavage of the mRNA. May play a role in the release non-functional ribosomes and degradation of damaged mRNAs. Has endoribonuclease activity. In Methanosphaera stadtmanae (strain ATCC 43021 / DSM 3091 / JCM 11832 / MCB-3), this protein is Protein pelota homolog.